Consider the following 310-residue polypeptide: Ribonuclease Z (310 aa).

Residues H61, H63, D65, H66, and H139 each contribute to the Zn(2+) site. D65 serves as the catalytic Proton acceptor. Residues 150–175 (EDDRPGRFDRPKAEELGVPVGPKFGR) are disordered. Residues 153–164 (RPGRFDRPKAEE) show a composition bias toward basic and acidic residues. Zn(2+)-binding residues include D210 and H268.

Belongs to the RNase Z family. Homodimer. Zn(2+) serves as cofactor.

The catalysed reaction is Endonucleolytic cleavage of RNA, removing extra 3' nucleotides from tRNA precursor, generating 3' termini of tRNAs. A 3'-hydroxy group is left at the tRNA terminus and a 5'-phosphoryl group is left at the trailer molecule.. Its function is as follows. Zinc phosphodiesterase, which displays some tRNA 3'-processing endonuclease activity. Probably involved in tRNA maturation, by removing a 3'-trailer from precursor tRNA. The chain is Ribonuclease Z from Halorubrum lacusprofundi (strain ATCC 49239 / DSM 5036 / JCM 8891 / ACAM 34).